Reading from the N-terminus, the 500-residue chain is L-arabinose isomerase (500 aa).

Glutamate 306, glutamate 333, histidine 350, and histidine 450 together coordinate Mn(2+).

It belongs to the arabinose isomerase family. As to quaternary structure, homohexamer. It depends on Mn(2+) as a cofactor.

The catalysed reaction is beta-L-arabinopyranose = L-ribulose. The protein operates within carbohydrate degradation; L-arabinose degradation via L-ribulose; D-xylulose 5-phosphate from L-arabinose (bacterial route): step 1/3. Its function is as follows. Catalyzes the conversion of L-arabinose to L-ribulose. This is L-arabinose isomerase from Salmonella arizonae (strain ATCC BAA-731 / CDC346-86 / RSK2980).